Consider the following 497-residue polypeptide: Cytochrome P450 71A14 (497 aa).

A helical membrane pass occupies residues 3 to 23 (MIIISLCLATILALLLLKQFL). Residue C440 coordinates heme.

The protein belongs to the cytochrome P450 family. Heme serves as cofactor.

The protein localises to the membrane. This chain is Cytochrome P450 71A14 (CYP71A14), found in Arabidopsis thaliana (Mouse-ear cress).